We begin with the raw amino-acid sequence, 213 residues long: Ras-related protein Rab-39B (213 aa).

GTP is bound by residues S17, G20, K21, S22, C23, S37, and T40. Residue S22 coordinates Mg(2+). Residues 35 to 43 form a switch-I region; it reads QVSDPTVGV. The Mg(2+) site is built by T40 and D64. 6 residues coordinate GTP: G67, H123, K124, D126, A154, and R155. Positions 67-83 are switch-II; it reads GQERFRSITRAYYRNSV. The residue at position 201 (S201) is a Phosphoserine. Residues C211 and C213 are each lipidated (S-geranylgeranyl cysteine). Residue C213 is modified to Cysteine methyl ester.

This sequence belongs to the small GTPase superfamily. Rab family. Interacts (GDP-bound) with C9orf72; C9orf72 in complex with SMCR8 acts as a GEF for RAB39B. Interacts (in GTP-bound form) with PICK1 (via PDZ domain); a PICK1 homodimer may allow simultaneous association of RAB39B and GRIA2 to PICK1 which is involved in GRIA2 trafficking. Interacts with isoform c of RASSF1; the interaction is strong. Interacts with isoform a of RASSF1; the interaction is weak. Interacts with the DLG4/PSD-95. Interacts (GTP-bound) with HOPS complex components VPS39 and VPS41. Requires Mg(2+) as cofactor. As to expression, highly expressed in the brain.

The protein resides in the cell membrane. Its subcellular location is the cytoplasmic vesicle membrane. It localises to the golgi apparatus. The protein localises to the cytoplasmic vesicle. It is found in the autophagosome membrane. The protein resides in the autolysosome membrane. The catalysed reaction is GTP + H2O = GDP + phosphate + H(+). Regulated by guanine nucleotide exchange factors (GEFs) including C9orf72-SMCR8 complex, which promote the exchange of bound GDP for free GTP. Regulated by GTPase activating proteins (GAPs) which increase the GTP hydrolysis activity. Inhibited by GDP dissociation inhibitors (GDIs). In terms of biological role, the small GTPases Rab are key regulators of intracellular membrane trafficking, from the formation of transport vesicles to their fusion with membranes. Rabs cycle between an inactive GDP-bound form and an active GTP-bound form that is able to recruit to membranes different sets of downstream effectors directly responsible for vesicle formation, movement, tethering and fusion. RAB39B is involved in autophagy and may function in autophagosome formation. Binds downstream effector PICK1 to ensure selectively GRIA2 exit from the endoplasmic reticulum to the Golgi and to regulate AMPAR composition at the post-synapses and thus synaptic transmission. May regulate the homeostasis of SNCA/alpha-synuclein. This Homo sapiens (Human) protein is Ras-related protein Rab-39B.